The following is a 526-amino-acid chain: Bifunctional purine biosynthesis protein PurH (526 aa).

Residues 1–145 (MIRTALLSVS…KNHQDVTVLI (145 aa)) enclose the MGS-like domain.

It belongs to the PurH family.

It catalyses the reaction (6R)-10-formyltetrahydrofolate + 5-amino-1-(5-phospho-beta-D-ribosyl)imidazole-4-carboxamide = 5-formamido-1-(5-phospho-D-ribosyl)imidazole-4-carboxamide + (6S)-5,6,7,8-tetrahydrofolate. The catalysed reaction is IMP + H2O = 5-formamido-1-(5-phospho-D-ribosyl)imidazole-4-carboxamide. It functions in the pathway purine metabolism; IMP biosynthesis via de novo pathway; 5-formamido-1-(5-phospho-D-ribosyl)imidazole-4-carboxamide from 5-amino-1-(5-phospho-D-ribosyl)imidazole-4-carboxamide (10-formyl THF route): step 1/1. Its pathway is purine metabolism; IMP biosynthesis via de novo pathway; IMP from 5-formamido-1-(5-phospho-D-ribosyl)imidazole-4-carboxamide: step 1/1. The chain is Bifunctional purine biosynthesis protein PurH from Polynucleobacter necessarius subsp. necessarius (strain STIR1).